Consider the following 676-residue polypeptide: Envelope glycoprotein (676 aa).

Positions 1–32 are cleaved as a signal peptide; sequence MGASGILQLPRERFRKTSFFVWVIILFHKVFS. Residues 33 to 650 are Extracellular-facing; the sequence is IPLGVVHNNT…GSNWWTGWKQ (618 aa). Asn40 is a glycosylation site (N-linked (GlcNAc...) asparagine; by host). Cystine bridges form between Cys53/Cys609, Cys108/Cys135, Cys121/Cys147, Cys511/Cys556, and Cys601/Cys608. Residues 54-201 form a receptor-binding region; sequence RDKLSSTSQL…DFFQSPPLHE (148 aa). N-linked (GlcNAc...) asparagine; by host glycans are attached at residues Asn204, Asn228, Asn257, Asn268, and Asn296. Residues 305-485 form a mucin-like region region; it reads ELSFVPVPET…LSGPGFLTNT (181 aa). The interval 356–463 is disordered; the sequence is IKGKDTMPTT…PTTLPEQHTA (108 aa). A compositionally biased stretch (low complexity) spans 361–374; it reads TMPTTVTGVPTTTP. The segment covering 402-422 has biased composition (polar residues); that stretch reads TTQPAKTTSQPTNSTESTTLN. Asn414 carries N-linked (GlcNAc...) asparagine; by host glycosylation. Low complexity predominate over residues 423–440; that stretch reads PTSEPSSRGTGPSSPTVP. N-linked (GlcNAc...) asparagine; by host glycosylation is present at Asn441. Residues 452-463 are compositionally biased toward polar residues; that stretch reads TTPTTLPEQHTA. Residues 524-539 are fusion peptide; sequence GAAIGLAWIPYFGPAA. The stretch at 554-595 forms a coiled coil; it reads LICGLRQLANETTQALQLFLRATTELRTFSILNRKAIDFLLQ. Asn563 carries an N-linked (GlcNAc...) asparagine; by host glycan. Residues 615-634 adopt a coiled-coil conformation; it reads WTKNITDKIDQIIHDFVDNN. An N-linked (GlcNAc...) asparagine; by host glycan is attached at Asn618. A helical transmembrane segment spans residues 651-671; that stretch reads WVPAGIGITGVIIAIIALLCI. 2 S-palmitoyl cysteine; by host lipidation sites follow: Cys670 and Cys672. At 672–676 the chain is on the cytoplasmic side; the sequence is CKFML.

This sequence belongs to the filoviruses glycoprotein family. In terms of assembly, homotrimer; each monomer consists of a GP1 and a GP2 subunit linked by disulfide bonds. The resulting peplomers (GP1,2) protrude from the virus surface as spikes. GP1 and GP2delta are part of GP1,2delta soluble complexes released by ectodomain shedding. GP1,2 interacts with host integrin ITGAV/alpha-V and CLEC10A. Also binds human CD209 and CLEC4M (collectively referred to as DC-SIGN(R)), as well as human FOLR1. Interacts with host entry receptor NPC1. The signal peptide region modulates GP's high mannose glycosylation, thereby determining the efficiency of the interactions with DC-SIGN(R). Post-translationally, N-glycosylated. In terms of processing, O-glycosylated in the mucin-like region. Palmitoylation of GP2 is not required for its function. Post-translationally, specific enzymatic cleavages in vivo yield mature proteins. The precursor is processed into GP1 and GP2 by host cell furin in the trans Golgi, and maybe by other host proteases, to yield the mature GP1 and GP2 proteins. The cleavage site corresponds to the furin optimal cleavage sequence [KR]-X-[KR]-R. This cleavage does not seem to be required for function. After the internalization of the virus into cell endosomes, GP1 C-terminus is removed by the endosomal proteases cathepsin B, cathepsin L, or both, leaving a 19-kDa N-terminal fragment which is further digested by cathepsin B. Proteolytic processing of GP1,2 by host ADAM17 can remove the transmembrane anchor of GP2 and leads to shedding of complexes consisting in GP1 and truncated GP2 (GP1,2delta).

Its subcellular location is the virion membrane. It localises to the host cell membrane. The protein localises to the secreted. Functionally, GP1 is responsible for binding to the receptor(s) on target cells. Interacts with CD209/DC-SIGN and CLEC4M/DC-SIGNR which act as cofactors for virus entry into the host cell. Binding to CD209 and CLEC4M, which are respectively found on dendritic cells (DCs), and on endothelial cells of liver sinusoids and lymph node sinuses, facilitate infection of macrophages and endothelial cells. These interactions not only facilitate virus cell entry, but also allow capture of viral particles by DCs and subsequent transmission to susceptible cells without DCs infection (trans infection). Binding to the macrophage specific lectin CLEC10A also seems to enhance virus infectivity. Interaction with FOLR1/folate receptor alpha may be a cofactor for virus entry in some cell types, although results are contradictory. Members of the Tyro3 receptor tyrosine kinase family also seem to be cell entry factors in filovirus infection. Once attached, the virions are internalized through clathrin-dependent endocytosis and/or macropinocytosis. After internalization of the virus into the endosomes of the host cell, proteolysis of GP1 by two cysteine proteases, CTSB/cathepsin B and CTSL/cathepsin L presumably induces a conformational change of GP2, unmasking its fusion peptide and initiating membranes fusion. GP2 acts as a class I viral fusion protein. Under the current model, the protein has at least 3 conformational states: pre-fusion native state, pre-hairpin intermediate state, and post-fusion hairpin state. During viral and target cell membrane fusion, the coiled coil regions (heptad repeats) assume a trimer-of-hairpins structure, positioning the fusion peptide in close proximity to the C-terminal region of the ectodomain. The formation of this structure appears to drive apposition and subsequent fusion of viral and target cell membranes. Responsible for penetration of the virus into the cell cytoplasm by mediating the fusion of the membrane of the endocytosed virus particle with the endosomal membrane. Low pH in endosomes induces an irreversible conformational change in GP2, releasing the fusion hydrophobic peptide. In terms of biological role, GP1,2 which is the disulfid-linked complex of GP1 and GP2, mediates endothelial cell activation and decreases endothelial barrier function. Mediates activation of primary macrophages. At terminal stages of the viral infection, when its expression is high, GP1,2 down-modulates the expression of various host cell surface molecules that are essential for immune surveillance and cell adhesion. Down-modulates integrins ITGA1, ITGA2, ITGA3, ITGA4, ITGA5, ITGA6, ITGAV and ITGB1. GP1,2 alters the cellular recycling of the dimer alpha-V/beta-3 via a dynamin-dependent pathway. Decrease in the host cell surface expression of various adhesion molecules may lead to cell detachment, contributing to the disruption of blood vessel integrity and hemorrhages developed during Ebola virus infection (cytotoxicity). This cytotoxicity appears late in the infection, only after the massive release of viral particles by infected cells. Down-modulation of host MHC-I, leading to altered recognition by immune cells, may explain the immune suppression and inflammatory dysfunction linked to Ebola infection. Also down-modulates EGFR surface expression. Counteracts the antiviral effect of host tetherin. Its function is as follows. GP2delta is part of the complex GP1,2delta released by host ADAM17 metalloprotease. This secreted complex may play a role in the pathogenesis of the virus by efficiently blocking the neutralizing antibodies that would otherwise neutralize the virus surface glycoproteins GP1,2. Might therefore contribute to the lack of inflammatory reaction seen during infection in spite the of extensive necrosis and massive virus production. GP1,2delta does not seem to be involved in activation of primary macrophages. The polypeptide is Envelope glycoprotein (GP) (Tai Forest ebolavirus (strain Cote d'Ivoire-94) (TAFV)).